Consider the following 1004-residue polypeptide: E3 ubiquitin-protein ligase NEDD4-like (1004 aa).

One can recognise a C2 domain in the interval Leu-30–Tyr-154. Disordered regions lie at residues Ser-207–Lys-230 and Ala-272–Val-407. The region spanning Pro-221 to Leu-254 is the WW 1 domain. Ser-341 is subject to Phosphoserine. Position 347 is a phosphothreonine (Thr-347). 2 stretches are compositionally biased toward polar residues: residues Thr-347 to Ile-359 and Arg-366 to Val-376. The residue at position 371 (Ser-371) is a Phosphoserine; by WNK1 and WNK4. Thr-396 bears the Phosphothreonine; by SGK1 mark. The 34-residue stretch at Pro-414–Met-447 folds into the WW 2 domain. The segment at Gly-453–Val-523 is disordered. Ser-475 carries the post-translational modification Phosphoserine. Ser-477 carries the post-translational modification Phosphoserine; by SGK1. A phosphoserine mark is found at Ser-478, Ser-493, Ser-504, Ser-508, Ser-512, and Ser-516. Residues Gly-489–Lys-500 show a composition bias toward basic and acidic residues. 2 consecutive WW domains span residues Ser-526–Leu-559 and Gly-577–Leu-610. Residues Arg-669–Val-1003 form the HECT domain. The Glycyl thioester intermediate role is filled by Cys-971.

Interacts with UBE2E3. Interacts with NDFIP1; this interaction activates the E3 ubiquitin-protein ligase. Interacts with NDFIP2; this interaction activates the E3 ubiquitin-protein ligase. Interacts (via WW domains) with SCN1A. Interacts (via WW domains) with SCN2A. Interacts (via WW domains) with SCN3A. Interacts (via WW domains) with SCN5A. Interacts (via WW domains) with SCN8A. Interacts (via WW domains) with SCN9A. Interacts (via WW domains) with SCN10A. Interacts (via WW domains) with CLCN5. Interacts with SMAD2. Interacts with SMAD3. Interacts with SMAD6. Interacts with SMAD7. The phosphorylated form interacts with 14-3-3 proteins. Interacts with TNK2. Interacts with WNK1. Interacts with SGK1. Interacts (via C2 domain) with NPC2. Interacts with ARRDC4. Interacts with KCNQ1; promotes internalization of KCNQ1. Interacts (via domains WW1, 3 and 4) with USP36; the interaction inhibits ubiquitination of, at least, NTRK1, KCNQ2 and KCNQ3 by NEDD4L. Interacts with PRRG4 (via cytoplasmic domain). Interacts with LDLRAD3; the interaction is direct. Interacts with UBE2D2. Interacts with TTYH2 and TTYH3. Post-translationally, phosphorylated; which impairs interaction with SCNN. Interaction with YWHAH inhibits dephosphorylation. Aldosterone induces Ser-477 phosphorylation by SGK1. In terms of processing, auto-ubiquitinated. Deubiquitinated by USP36, no effect on NEDD4L protein levels. Both proteins interact and regulate each other's ubiquitination levels. In terms of tissue distribution, highly expressed in liver and kidney. Also expressed in heart, brain and lung. Isoform 1 is expressed in kidney, lung and gut. Isoform 3 is ubiquitously expressed.

It localises to the cytoplasm. It is found in the golgi apparatus. Its subcellular location is the endosome. The protein resides in the multivesicular body. The catalysed reaction is S-ubiquitinyl-[E2 ubiquitin-conjugating enzyme]-L-cysteine + [acceptor protein]-L-lysine = [E2 ubiquitin-conjugating enzyme]-L-cysteine + N(6)-ubiquitinyl-[acceptor protein]-L-lysine.. It catalyses the reaction [E2 ubiquitin-conjugating enzyme]-S-ubiquitinyl-L-cysteine + [acceptor protein]-L-cysteine = [E2 ubiquitin-conjugating enzyme]-L-cysteine + [acceptor protein]-S-ubiquitinyl-L-cysteine.. The protein operates within protein modification; protein ubiquitination. Activated by NDFIP1- and NDFIP2-binding. E3 ubiquitin-protein ligase that mediates the polyubiquitination of lysine and cysteine residues on target proteins and is thereby implicated in the regulation of various signaling pathways including autophagy, innate immunity or DNA repair. Inhibits TGF-beta signaling by triggering SMAD2 and TGFBR1 ubiquitination and proteasome-dependent degradation. Downregulates autophagy and cell growth by ubiquitinating and reducing cellular ULK1 or ASCT2 levels. Promotes ubiquitination and internalization of various plasma membrane channels such as ENaC, SCN2A/Nav1.2, SCN3A/Nav1.3, SCN5A/Nav1.5, SCN9A/Nav1.7, SCN10A/Nav1.8, KCNA3/Kv1.3, KCNH2, EAAT1, KCNQ2/Kv7.2, KCNQ3/Kv7.3 or CLC5. Promotes ubiquitination and degradation of SGK1 and TNK2. Ubiquitinates BRAT1 and this ubiquitination is enhanced in the presence of NDFIP1. Plays a role in dendrite formation by melanocytes. Involved in the regulation of TOR signaling. Ubiquitinates and regulates protein levels of NTRK1 once this one is activated by NGF. Plays a role in antiviral innate immunity by catalyzing 'Lys-29'-linked cysteine ubiquitination of TRAF3, resulting in enhanced 'Lys-48' and 'Lys-63'-linked ubiquitination of TRAF3. Ubiquitinates TTYH2 and TYYH3 and regulates protein levels of TTYH2. The chain is E3 ubiquitin-protein ligase NEDD4-like (Nedd4l) from Mus musculus (Mouse).